Consider the following 554-residue polypeptide: Chaperonin GroEL (554 aa).

Residues 29–32 (TLGP), lysine 50, 86–90 (DGTTT), glycine 414, and aspartate 495 each bind ATP.

Belongs to the chaperonin (HSP60) family. As to quaternary structure, forms a cylinder of 14 subunits composed of two heptameric rings stacked back-to-back. Interacts with the co-chaperonin GroES.

The protein resides in the cytoplasm. It catalyses the reaction ATP + H2O + a folded polypeptide = ADP + phosphate + an unfolded polypeptide.. Together with its co-chaperonin GroES, plays an essential role in assisting protein folding. The GroEL-GroES system forms a nano-cage that allows encapsulation of the non-native substrate proteins and provides a physical environment optimized to promote and accelerate protein folding. This is Chaperonin GroEL from Pelagibacter ubique (strain HTCC1062).